The following is a 622-amino-acid chain: Basal cell adhesion molecule (622 aa).

An N-terminal signal peptide occupies residues 1 to 25 (MEPPDARAGLLWLTFLLSGYSGAQA). Ig-like V-type domains lie at 26-135 (ELHV…SSVR) and 140-250 (PEDT…HTFR). The Extracellular portion of the chain corresponds to 26 to 541 (ELHVSVPPRV…GSVAPQTAQA (516 aa)). 3 disulfides stabilise this stretch: cysteine 47/cysteine 118, cysteine 165/cysteine 230, and cysteine 284/cysteine 330. Ig-like C2-type domains follow at residues 267–342 (PSTT…EEVQ), 356–435 (PLEL…QSFQ), and 442–532 (PELK…FHFG). Asparagine 314, asparagine 323, asparagine 370, and asparagine 377 each carry an N-linked (GlcNAc...) asparagine glycan. Disulfide bonds link cysteine 378-cysteine 418 and cysteine 467-cysteine 516. The helical transmembrane segment at 542-562 (GVAVMAVAVSVGLLLLVVAAF) threads the bilayer. Over 563–622 (YCMRRKGRPGCCRRAEKGAPPAREPELSHSGSERPEHTGLLMGGPSGGGRGGSGGFGDEC) the chain is Cytoplasmic. Residues 574–622 (CRRAEKGAPPAREPELSHSGSERPEHTGLLMGGPSGGGRGGSGGFGDEC) form a disordered region. Over residues 575–599 (RRAEKGAPPAREPELSHSGSERPEH) the composition is skewed to basic and acidic residues. Residues serine 590, serine 592, serine 594, and serine 615 each carry the phosphoserine modification. A compositionally biased stretch (gly residues) spans 603–622 (LMGGPSGGGRGGSGGFGDEC).

In terms of assembly, homodimer. Interacts with ITGA4:ITGB1. Interacts with spectrins SPTA1 and SPTB1. Epinephrine-stimulated phosphorylation of Ser-615 by PKA enhances adhesion to laminin. Ser-615 can also be phosphorylated by AKT1.

Its subcellular location is the cell membrane. In terms of biological role, transmembrane glycoprotein that functions as both a receptor and an adhesion molecule playing a crucial role in cell adhesion, motility, migration and invasion. Extracellular domain enables binding to extracellular matrix proteins, such as laminin, integrin and other ligands while its intracellular domain interacts with cytoskeletal proteins like hemoglobin, facilitating cell signal transduction. Serves as a receptor for laminin alpha-5/LAMA5 to promote cell adhesion. Mechanistically, JAK2 induces BCAM phosphorylation and activates its adhesion to laminin by stimulating a Rap1/AKT signaling pathway in the absence of EPOR. This Mus musculus (Mouse) protein is Basal cell adhesion molecule (Bcam).